A 146-amino-acid chain; its full sequence is P antigen family member 1 (146 aa).

Residues 16-146 form a disordered region; the sequence is YVESSEESSD…PEEDEGQSQP (131 aa). A compositionally biased stretch (acidic residues) spans 19–32; the sequence is SSEESSDEQPDEVE. Position 63 is a phosphoserine (Ser-63). Over residues 79 to 92 the composition is skewed to basic and acidic residues; it reads PDTKRVCLRNEEQM. A Phosphoserine modification is found at Ser-105. Residues 107-120 show a composition bias toward basic and acidic residues; that stretch reads EQVHPKTGCERGDG. The residue at position 144 (Ser-144) is a Phosphoserine.

The protein belongs to the GAGE family. Isolated from prostate cancer cell lines; expression associated with progression to androgen insensitive phenotype. Expressed in normal testis and at lower level in normal placenta.

The chain is P antigen family member 1 (PAGE1) from Homo sapiens (Human).